The sequence spans 698 residues: RNA cytosine-C(5)-methyltransferase NSUN2 (698 aa).

The span at 1-10 shows a compositional bias: basic residues; the sequence is MGRKNRRNRQ. The segment at 1–28 is disordered; that stretch reads MGRKNRRNRQRRTEQRSPAEEERRKARE. Positions 11–28 are enriched in basic and acidic residues; the sequence is RRTEQRSPAEEERRKARE. Residues 182–188, D213, D240, and D266 each bind S-adenosyl-L-methionine; that span reads CAAPGSK. C319 acts as the Nucleophile in catalysis. Residues 472-496 form a disordered region; that stretch reads AVDAENGETKPCTNQSGSSKTDSVC. Residues 482–493 show a composition bias toward polar residues; sequence PCTNQSGSSKTD.

The protein belongs to the class I-like SAM-binding methyltransferase superfamily. RsmB/NOP family. TRM4 subfamily.

Its subcellular location is the nucleus. The protein resides in the nucleolus. It is found in the cytoplasm. It localises to the mitochondrion. The protein localises to the cytoskeleton. Its subcellular location is the spindle. The protein resides in the secreted. It is found in the extracellular exosome. It catalyses the reaction cytidine(48) in tRNA + S-adenosyl-L-methionine = 5-methylcytidine(48) in tRNA + S-adenosyl-L-homocysteine + H(+). The enzyme catalyses cytidine(49) in tRNA + S-adenosyl-L-methionine = 5-methylcytidine(49) in tRNA + S-adenosyl-L-homocysteine + H(+). It carries out the reaction cytidine(50) in tRNA + S-adenosyl-L-methionine = 5-methylcytidine(50) in tRNA + S-adenosyl-L-homocysteine + H(+). The catalysed reaction is cytidine(34) in tRNA precursor + S-adenosyl-L-methionine = 5-methylcytidine(34) in tRNA precursor + S-adenosyl-L-homocysteine + H(+). It catalyses the reaction a cytidine in mRNA + S-adenosyl-L-methionine = a 5-methylcytidine in mRNA + S-adenosyl-L-homocysteine + H(+). In terms of biological role, RNA cytosine C(5)-methyltransferase that methylates cytosine to 5-methylcytosine (m5C) in various RNAs, such as tRNAs, mRNAs and some long non-coding RNAs (lncRNAs). Involved in various processes, such as epidermal stem cell differentiation, testis differentiation and maternal to zygotic transition during early development: acts by increasing protein synthesis; cytosine C(5)-methylation promoting tRNA stability and preventing mRNA decay. Methylates cytosine to 5-methylcytosine (m5C) at positions 34 and 48 of intron-containing tRNA(Leu)(CAA) precursors, and at positions 48, 49 and 50 of tRNA(Gly)(GCC) precursors. tRNA methylation is required generation of RNA fragments derived from tRNAs (tRFs). Also mediates C(5)-methylation of mitochondrial tRNAs. Catalyzes cytosine C(5)-methylation of mRNAs, leading to stabilize them and prevent mRNA decay. Cytosine C(5)-methylation of mRNAs also regulates mRNA export. Also mediates cytosine C(5)-methylation of non-coding RNAs, such as vault RNAs (vtRNAs), promoting their processing into regulatory small RNAs. Required for proper spindle assembly and chromosome segregation, independently of its methyltransferase activity. The chain is RNA cytosine-C(5)-methyltransferase NSUN2 from Xenopus laevis (African clawed frog).